The following is a 230-amino-acid chain: 3,4-dihydroxy-2-butanone 4-phosphate synthase (230 aa).

D-ribulose 5-phosphate is bound by residues 38–39 (RE), Asp-43, 151–155 (RRGHT), and Glu-175. Residue Glu-39 coordinates Mg(2+). Residue His-154 coordinates Mg(2+).

The protein belongs to the DHBP synthase family. As to quaternary structure, homodimer. Requires Mg(2+) as cofactor. Mn(2+) serves as cofactor.

The enzyme catalyses D-ribulose 5-phosphate = (2S)-2-hydroxy-3-oxobutyl phosphate + formate + H(+). The protein operates within cofactor biosynthesis; riboflavin biosynthesis; 2-hydroxy-3-oxobutyl phosphate from D-ribulose 5-phosphate: step 1/1. Functionally, catalyzes the conversion of D-ribulose 5-phosphate to formate and 3,4-dihydroxy-2-butanone 4-phosphate. This Vibrio harveyi (Beneckea harveyi) protein is 3,4-dihydroxy-2-butanone 4-phosphate synthase.